Reading from the N-terminus, the 216-residue chain is uncharacterized protein (216 aa).

Residues Tyr-125 to Leu-176 form the Cupin type-2 domain.

This is an uncharacterized protein from Sinorhizobium fredii (strain NBRC 101917 / NGR234).